Here is a 675-residue protein sequence, read N- to C-terminus: Potassium-transporting ATPase ATP-binding subunit (675 aa).

The next 4 membrane-spanning stretches (helical) occupy residues 34–54 (IMFV…FPDI), 65–85 (LITI…SEAF), 216–236 (IALF…IVTL), and 245–265 (LILP…TTIG). The 4-aspartylphosphate intermediate role is filled by D304. ATP contacts are provided by residues D341, E345, 372 to 379 (FTAETRMS), and K390. D513 and D517 together coordinate Mg(2+). The next 3 helical transmembrane spans lie at 569-591 (ALTT…ALMM), 611-631 (AIIS…PIAM), and 644-664 (IFIN…FLGI).

This sequence belongs to the cation transport ATPase (P-type) (TC 3.A.3) family. Type IA subfamily. The system is composed of three essential subunits: KdpA, KdpB and KdpC.

It is found in the cell membrane. The catalysed reaction is K(+)(out) + ATP + H2O = K(+)(in) + ADP + phosphate + H(+). In terms of biological role, part of the high-affinity ATP-driven potassium transport (or Kdp) system, which catalyzes the hydrolysis of ATP coupled with the electrogenic transport of potassium into the cytoplasm. This subunit is responsible for energy coupling to the transport system and for the release of the potassium ions to the cytoplasm. This chain is Potassium-transporting ATPase ATP-binding subunit, found in Staphylococcus aureus (strain Newman).